Consider the following 642-residue polypeptide: Mediator of RNA polymerase II transcription subunit 17 (642 aa).

Positions 210-232 are disordered; that stretch reads AEETGDEDTASSSNSSSSVSGNN. Low complexity predominate over residues 220–232; sequence SSSNSSSSVSGNN.

This sequence belongs to the Mediator complex subunit 17 family. As to quaternary structure, component of the Mediator complex, which includes at least CDK8, MED4, MED6, MED11, MED14, MED17, MED18, MED20, MED21, MED22, MED27, MED28, MED30 and MED31. Interacts with Hsf.

The protein resides in the nucleus. It is found in the chromosome. Its function is as follows. Component of the Mediator complex, a coactivator involved in the regulated transcription of nearly all RNA polymerase II-dependent genes. Mediator functions as a bridge to convey information from gene-specific regulatory proteins to the basal RNA polymerase II transcription machinery. Mediator is recruited to promoters by direct interactions with regulatory proteins and serves as a scaffold for the assembly of a functional preinitiation complex with RNA polymerase II and the general transcription factors. Required for activated transcription of the MtnA, MtnB and MtnD genes. Negatively regulates sex comb development. The sequence is that of Mediator of RNA polymerase II transcription subunit 17 (MED17) from Drosophila melanogaster (Fruit fly).